A 233-amino-acid polypeptide reads, in one-letter code: Putative N-acetylmannosamine-6-phosphate 2-epimerase (233 aa).

It belongs to the NanE family.

The catalysed reaction is an N-acyl-D-glucosamine 6-phosphate = an N-acyl-D-mannosamine 6-phosphate. Its pathway is amino-sugar metabolism; N-acetylneuraminate degradation; D-fructose 6-phosphate from N-acetylneuraminate: step 3/5. In terms of biological role, converts N-acetylmannosamine-6-phosphate (ManNAc-6-P) to N-acetylglucosamine-6-phosphate (GlcNAc-6-P). This chain is Putative N-acetylmannosamine-6-phosphate 2-epimerase, found in Yersinia pseudotuberculosis serotype O:3 (strain YPIII).